The following is a 969-amino-acid chain: Surface protein P113 (969 aa).

Residues Met-1–Cys-22 form the signal peptide. N-linked (GlcNAc...) asparagine glycosylation is present at Asn-207. The disordered stretch occupies residues Ile-223–Asn-328. The span at Asp-229 to Asn-241 shows a compositional bias: polar residues. A glycan (N-linked (GlcNAc...) asparagine) is linked at Asn-268. Residues Lys-300–Ser-311 are compositionally biased toward basic and acidic residues. Positions Ser-312–Asn-325 are enriched in low complexity. Asn-317, Asn-360, Asn-661, and Asn-697 each carry an N-linked (GlcNAc...) asparagine glycan. Polar residues predominate over residues Ser-688–Gln-705. Residues Ser-688–Ser-947 are disordered. The segment covering Gln-713 to Asn-727 has biased composition (low complexity). The segment covering Asn-728–Gln-749 has biased composition (basic and acidic residues). A glycan (N-linked (GlcNAc...) asparagine) is linked at Asn-779. Acidic residues predominate over residues Glu-798 to Glu-811. Residues Ser-812–Glu-822 are compositionally biased toward basic and acidic residues. Residues Gln-823 to Thr-841 show a composition bias toward acidic residues. Residues Glu-842–Gln-854 show a composition bias toward basic and acidic residues. Residues Lys-855 to Glu-864 are compositionally biased toward acidic residues. Asn-876 is a glycosylation site (N-linked (GlcNAc...) asparagine). Over residues Glu-883–Gln-896 the composition is skewed to basic and acidic residues. The segment covering Gly-897–Ser-907 has biased composition (low complexity). Positions Ser-908–Glu-917 are enriched in basic and acidic residues. Acidic residues predominate over residues Asp-918–Thr-936. Over residues Pro-937–Ser-947 the composition is skewed to polar residues. Residues Asn-938, Asn-941, and Asn-945 are each glycosylated (N-linked (GlcNAc...) asparagine). Residue Asn-945 is the site of GPI-anchor amidated asparagine attachment. Residues Gly-946–Leu-969 constitute a propeptide, removed in mature form.

As to quaternary structure, forms a complex composed of RH5, P113 and human BSG/basigin; the complex bridges the merozoite and host erythrocyte membranes. Within the complex, interacts with RH5 (via N-terminus); the interaction tethers RH5 to the merozoite membrane.

The protein localises to the cell membrane. Membrane receptor which tethers secreted RH5 to the merozoite membrane during merozoite invasion of host erythocytes. This is Surface protein P113 from Plasmodium falciparum (isolate 3D7).